The chain runs to 166 residues: Urease accessory protein UreE (166 aa).

Belongs to the UreE family.

It is found in the cytoplasm. Functionally, involved in urease metallocenter assembly. Binds nickel. Probably functions as a nickel donor during metallocenter assembly. In Azotobacter vinelandii (strain DJ / ATCC BAA-1303), this protein is Urease accessory protein UreE.